A 401-amino-acid polypeptide reads, in one-letter code: Elongation factor Tu (401 aa).

The tr-type G domain occupies 10 to 211 (KPHLNVGTIG…ALDTFVPNPK (202 aa)). The interval 19 to 26 (GHVDHGKT) is G1. 19–26 (GHVDHGKT) lines the GTP pocket. Thr26 is a Mg(2+) binding site. Positions 62–66 (GITIA) are G2. Residues 83–86 (DCPG) are G3. GTP-binding positions include 83-87 (DCPGH) and 138-141 (NKAD). A G4 region spans residues 138 to 141 (NKAD). The G5 stretch occupies residues 179–181 (SAV).

The protein belongs to the TRAFAC class translation factor GTPase superfamily. Classic translation factor GTPase family. EF-Tu/EF-1A subfamily. In terms of assembly, monomer.

It is found in the cytoplasm. It carries out the reaction GTP + H2O = GDP + phosphate + H(+). Functionally, GTP hydrolase that promotes the GTP-dependent binding of aminoacyl-tRNA to the A-site of ribosomes during protein biosynthesis. The protein is Elongation factor Tu of Leptospira borgpetersenii serovar Hardjo-bovis (strain JB197).